The chain runs to 304 residues: Acetylglutamate kinase (304 aa).

Substrate contacts are provided by residues 70 to 71 (GG), arginine 92, and asparagine 185.

Belongs to the acetylglutamate kinase family. ArgB subfamily.

The protein localises to the cytoplasm. The catalysed reaction is N-acetyl-L-glutamate + ATP = N-acetyl-L-glutamyl 5-phosphate + ADP. It participates in amino-acid biosynthesis; L-arginine biosynthesis; N(2)-acetyl-L-ornithine from L-glutamate: step 2/4. Catalyzes the ATP-dependent phosphorylation of N-acetyl-L-glutamate. The sequence is that of Acetylglutamate kinase from Paracoccus denitrificans (strain Pd 1222).